The primary structure comprises 467 residues: Hexon protein (467 aa).

The interval 1 to 54 (AYNALAPKGAPNSCEWEQEEPTQEMAGELEDEEEAEEEEAEEEAEAPQAGQKVK) is disordered. Over residues 16-45 (WEQEEPTQEMAGELEDEEEAEEEEAEEEAE) the composition is skewed to acidic residues.

This sequence belongs to the adenoviridae hexon protein family. Homotrimer. Interacts with the capsid vertex protein; this interaction binds the peripentonal hexons to the neighboring penton base. Interacts with the hexon-linking protein; this interaction tethers the hexons surrounding the penton to those situated in the central plate of the facet. Interacts with the hexon-interlacing protein; this interaction lashes the hexons together. Interacts with host dyneins DYNC1LI1 and DYNC1I2; this interaction might be involved in intracellular microtubule-dependent transport of incoming viral capsid. Interacts with the shutoff protein; this interaction allows folding and formation of hexons trimers. Interacts with pre-protein VI; this interaction probably allows nuclear import of hexon trimers and possibly pre-capsid assembly.

It is found in the virion. The protein localises to the host nucleus. Functionally, major capsid protein that self-associates to form 240 hexon trimers, each in the shape of a hexagon, building most of the pseudo T=25 capsid. Assembled into trimeric units with the help of the chaperone shutoff protein. Transported by pre-protein VI to the nucleus where it associates with other structural proteins to form an empty capsid. Might be involved, through its interaction with host dyneins, in the intracellular microtubule-dependent transport of incoming viral capsid to the nucleus. The polypeptide is Hexon protein (Homo sapiens (Human)).